A 637-amino-acid polypeptide reads, in one-letter code: Threonine--tRNA ligase (637 aa).

The TGS domain maps to 1 to 61 (MVTVTLPDGS…DADAQLAIVT (61 aa)). The interval 244 to 535 (DHRRLAKQLD…LIEHHAGNFP (292 aa)) is catalytic. Residues Cys335, His386, and His512 each coordinate Zn(2+).

This sequence belongs to the class-II aminoacyl-tRNA synthetase family. Homodimer. Requires Zn(2+) as cofactor.

It localises to the cytoplasm. It carries out the reaction tRNA(Thr) + L-threonine + ATP = L-threonyl-tRNA(Thr) + AMP + diphosphate + H(+). In terms of biological role, catalyzes the attachment of threonine to tRNA(Thr) in a two-step reaction: L-threonine is first activated by ATP to form Thr-AMP and then transferred to the acceptor end of tRNA(Thr). Also edits incorrectly charged L-seryl-tRNA(Thr). The sequence is that of Threonine--tRNA ligase from Thiobacillus denitrificans (strain ATCC 25259 / T1).